The primary structure comprises 475 residues: Ribulose bisphosphate carboxylase large chain (475 aa).

The propeptide occupies 1 to 2 (MS). An N-acetylproline modification is found at Pro-3. Lys-14 bears the N6,N6,N6-trimethyllysine mark. Asn-123 and Thr-173 together coordinate substrate. Residue Lys-175 is the Proton acceptor of the active site. Lys-177 contacts substrate. Mg(2+)-binding residues include Lys-201, Asp-203, and Glu-204. Position 201 is an N6-carboxylysine (Lys-201). The active-site Proton acceptor is the His-294. Arg-295, His-327, and Ser-379 together coordinate substrate.

This sequence belongs to the RuBisCO large chain family. Type I subfamily. Heterohexadecamer of 8 large chains and 8 small chains; disulfide-linked. The disulfide link is formed within the large subunit homodimers. Mg(2+) is required as a cofactor. The disulfide bond which can form in the large chain dimeric partners within the hexadecamer appears to be associated with oxidative stress and protein turnover.

Its subcellular location is the plastid. The protein resides in the chloroplast. It catalyses the reaction 2 (2R)-3-phosphoglycerate + 2 H(+) = D-ribulose 1,5-bisphosphate + CO2 + H2O. It carries out the reaction D-ribulose 1,5-bisphosphate + O2 = 2-phosphoglycolate + (2R)-3-phosphoglycerate + 2 H(+). In terms of biological role, ruBisCO catalyzes two reactions: the carboxylation of D-ribulose 1,5-bisphosphate, the primary event in carbon dioxide fixation, as well as the oxidative fragmentation of the pentose substrate in the photorespiration process. Both reactions occur simultaneously and in competition at the same active site. In Carpinus caroliniana (American hornbeam), this protein is Ribulose bisphosphate carboxylase large chain.